The primary structure comprises 121 residues: Large ribosomal subunit protein bL19 (121 aa).

Belongs to the bacterial ribosomal protein bL19 family.

In terms of biological role, this protein is located at the 30S-50S ribosomal subunit interface and may play a role in the structure and function of the aminoacyl-tRNA binding site. The sequence is that of Large ribosomal subunit protein bL19 from Legionella pneumophila (strain Paris).